We begin with the raw amino-acid sequence, 397 residues long: Cercosporin biosynthesis regulatory protein CTB8 (397 aa).

The zn(2)-C6 fungal-type DNA-binding region spans C26–C53. Disordered stretches follow at residues G62–K92 and A173–H198. A compositionally biased stretch (polar residues) spans P74–P87. Positions P179 to T197 are enriched in low complexity.

The protein resides in the nucleus. Transcription regulator of the gene cluster that mediates the biosynthesis of cercosporin, a light-activated, non-host-selective toxin. The perylenequinone chromophore of cercosporin absorbs light energy to attain an electronically-activated triplet state and produces active oxygen species such as the hydroxyl radical, superoxide, hydrogen peroxide or singlet oxygen upon reaction with oxygen molecules. These reactive oxygen species cause damage to various cellular components including lipids, proteins and nucleic acids. This Cercospora nicotianae (Barn spot disease fungus) protein is Cercosporin biosynthesis regulatory protein CTB8.